A 107-amino-acid chain; its full sequence is MTYLFYTAAALAEIAGCFSVWAWWRLERSPLWLAPGFVSLLLFAWLLALVDTNAAGRAYAAYGGIYIAASLAWLWLVEGVRPDRWDLAGAALCIAGASLILLAPRGA.

Helical transmembrane passes span 4–24, 30–50, 60–80, and 87–107; these read LFYT…WAWW, PLWL…LALV, AAYG…VEGV, and LAGA…PRGA.

This sequence belongs to the UPF0060 family.

It is found in the cell inner membrane. The chain is UPF0060 membrane protein mll7841 from Mesorhizobium japonicum (strain LMG 29417 / CECT 9101 / MAFF 303099) (Mesorhizobium loti (strain MAFF 303099)).